A 343-amino-acid polypeptide reads, in one-letter code: Anthranilate phosphoribosyltransferase (343 aa).

5-phospho-alpha-D-ribose 1-diphosphate contacts are provided by residues Gly86, 89 to 90, Thr94, 96 to 99, 114 to 122, and Ser126; these read GD, NIST, and KHGNRSASG. Residue Gly86 coordinates anthranilate. Residue Ser98 coordinates Mg(2+). Residue Asn117 coordinates anthranilate. Residue Arg172 participates in anthranilate binding. Mg(2+) contacts are provided by Asp231 and Glu232.

This sequence belongs to the anthranilate phosphoribosyltransferase family. As to quaternary structure, homodimer. Requires Mg(2+) as cofactor.

The catalysed reaction is N-(5-phospho-beta-D-ribosyl)anthranilate + diphosphate = 5-phospho-alpha-D-ribose 1-diphosphate + anthranilate. It participates in amino-acid biosynthesis; L-tryptophan biosynthesis; L-tryptophan from chorismate: step 2/5. Catalyzes the transfer of the phosphoribosyl group of 5-phosphorylribose-1-pyrophosphate (PRPP) to anthranilate to yield N-(5'-phosphoribosyl)-anthranilate (PRA). The chain is Anthranilate phosphoribosyltransferase from Synechococcus sp. (strain JA-3-3Ab) (Cyanobacteria bacterium Yellowstone A-Prime).